The chain runs to 331 residues: MAEGGRAEPEEQERGSSRPRPPSARDLQLALAELYEDEMKCKSSKPDRSTPATCRSPRTPPHRLYSGDHKYDGLHIVQPPTGKIVNELFKEAREHGAVPLNEATRSSREDKTKSFTGGGYRLGNSFYKRSEYIYGENQLQDVQVLLKLWRNGFSLDDGELRPYSDPTNAQFLESVKRGETPLELQRLVHGAQVNLDMEDHQDQEYIKPRLRFKAFSGEGQKLGSLTPEIVSTPSSPEEEDKSILNAAVLIDDSMPTTKIQIRLADGSRLVQRFNSTHRILDVRDFIVRSRPEFATTDFILVTSFPSKELTDETVTLQEADILNTVILQQLK.

2 stretches are compositionally biased toward basic and acidic residues: residues 1–16 (MAEG…ERGS) and 37–48 (DEMKCKSSKPDR). The disordered stretch occupies residues 1–70 (MAEGGRAEPE…PHRLYSGDHK (70 aa)). The residue at position 2 (A2) is an N-acetylalanine. S56 is subject to Phosphoserine. Phosphothreonine is present on T59. S66 is modified (phosphoserine). Positions 141 to 206 (DVQVLLKLWR…MEDHQDQEYI (66 aa)) constitute an SEP domain. 3 positions are modified to phosphoserine: S231, S234, and S235. Residues 252-329 (DSMPTTKIQI…DILNTVILQQ (78 aa)) form the UBX domain.

The protein belongs to the NSFL1C family. In terms of assembly, interacts with VCP. Does not bind ubiquitin.

It is found in the nucleus. Its subcellular location is the cytoplasm. It localises to the cytosol. The protein localises to the endoplasmic reticulum. The protein resides in the golgi apparatus. It is found in the cytoskeleton. Its subcellular location is the microtubule organizing center. It localises to the centrosome. Adapter protein required for Golgi and endoplasmic reticulum biogenesis. Involved in Golgi and endoplasmic reticulum maintenance during interphase and in their reassembly at the end of mitosis. The complex formed with VCP has membrane fusion activity; membrane fusion activity requires USO1-GOLGA2 tethering and BET1L. VCPIP1 is also required, but not its deubiquitinating activity. Together with NSFL1C/p47, regulates the centrosomal levels of kinase AURKA/Aurora A during mitotic progression by promoting AURKA removal from centrosomes in prophase. Also, regulates spindle orientation during mitosis. The protein is UBX domain-containing protein 2B (Ubxn2b) of Mus musculus (Mouse).